Reading from the N-terminus, the 599-residue chain is Proteasome-associated ATPase (599 aa).

The interval 1–22 (MPHGHPGSQPDEGGELSNGSSS) is disordered. Residues 21–97 (SSGELTAQIR…LREEVDRLAQ (77 aa)) adopt a coiled-coil conformation. 286-291 (GCGKTL) is a binding site for ATP. The interval 598–599 (YL) is docks into pockets in the proteasome alpha-ring.

The protein belongs to the AAA ATPase family. Homohexamer. Assembles into a hexameric ring structure that caps the 20S proteasome core. Strongly interacts with the prokaryotic ubiquitin-like protein Pup through a hydrophobic interface; the interacting region of ARC lies in its N-terminal coiled-coil domain. There is one Pup binding site per ARC hexamer ring. Upon ATP-binding, the C-terminus of ARC interacts with the alpha-rings of the proteasome core, possibly by binding to the intersubunit pockets.

The protein operates within protein degradation; proteasomal Pup-dependent pathway. ATPase which is responsible for recognizing, binding, unfolding and translocation of pupylated proteins into the bacterial 20S proteasome core particle. May be essential for opening the gate of the 20S proteasome via an interaction with its C-terminus, thereby allowing substrate entry and access to the site of proteolysis. Thus, the C-termini of the proteasomal ATPase may function like a 'key in a lock' to induce gate opening and therefore regulate proteolysis. The sequence is that of Proteasome-associated ATPase from Actinosynnema mirum (strain ATCC 29888 / DSM 43827 / JCM 3225 / NBRC 14064 / NCIMB 13271 / NRRL B-12336 / IMRU 3971 / 101).